The primary structure comprises 170 residues: Crossover junction endodeoxyribonuclease RuvC (170 aa).

Residues Asp11, Glu71, and Asp143 contribute to the active site. 3 residues coordinate Mg(2+): Asp11, Glu71, and Asp143.

Belongs to the RuvC family. As to quaternary structure, homodimer which binds Holliday junction (HJ) DNA. The HJ becomes 2-fold symmetrical on binding to RuvC with unstacked arms; it has a different conformation from HJ DNA in complex with RuvA. In the full resolvosome a probable DNA-RuvA(4)-RuvB(12)-RuvC(2) complex forms which resolves the HJ. Requires Mg(2+) as cofactor.

Its subcellular location is the cytoplasm. The enzyme catalyses Endonucleolytic cleavage at a junction such as a reciprocal single-stranded crossover between two homologous DNA duplexes (Holliday junction).. Functionally, the RuvA-RuvB-RuvC complex processes Holliday junction (HJ) DNA during genetic recombination and DNA repair. Endonuclease that resolves HJ intermediates. Cleaves cruciform DNA by making single-stranded nicks across the HJ at symmetrical positions within the homologous arms, yielding a 5'-phosphate and a 3'-hydroxyl group; requires a central core of homology in the junction. The consensus cleavage sequence is 5'-(A/T)TT(C/G)-3'. Cleavage occurs on the 3'-side of the TT dinucleotide at the point of strand exchange. HJ branch migration catalyzed by RuvA-RuvB allows RuvC to scan DNA until it finds its consensus sequence, where it cleaves and resolves the cruciform DNA. This is Crossover junction endodeoxyribonuclease RuvC from Agrobacterium fabrum (strain C58 / ATCC 33970) (Agrobacterium tumefaciens (strain C58)).